A 291-amino-acid chain; its full sequence is Transcription antitermination protein NusB (291 aa).

It belongs to the NusB family.

Involved in transcription antitermination. Required for transcription of ribosomal RNA (rRNA) genes. Binds specifically to the boxA antiterminator sequence of the ribosomal RNA (rrn) operons. The protein is Transcription antitermination protein NusB of Synechococcus sp. (strain JA-2-3B'a(2-13)) (Cyanobacteria bacterium Yellowstone B-Prime).